Here is a 212-residue protein sequence, read N- to C-terminus: Large ribosomal subunit protein uL1 (212 aa).

Belongs to the universal ribosomal protein uL1 family. Part of the 50S ribosomal subunit.

Its function is as follows. Binds directly to 23S rRNA. Probably involved in E site tRNA release. In terms of biological role, protein L1 is also a translational repressor protein, it controls the translation of its operon by binding to its mRNA. This is Large ribosomal subunit protein uL1 from Haloferax volcanii (strain ATCC 29605 / DSM 3757 / JCM 8879 / NBRC 14742 / NCIMB 2012 / VKM B-1768 / DS2) (Halobacterium volcanii).